The sequence spans 453 residues: O-glucose prenyltransferase PaPT (453 aa).

95 to 96 is a binding site for L-tryptophan; that stretch reads AP. The substrate site is built by Lys210, Tyr212, Arg279, Lys281, Tyr283, Tyr368, and Tyr435.

This sequence belongs to the tryptophan dimethylallyltransferase family.

Its pathway is mycotoxin biosynthesis. O-glucose prenyltransferase; part of the 2 gene clusters that mediate the biosynthesis of fusicoccins, diterpene glucosides that display phytohormone-like activity and function as potent activators of plasma membrane H(+)-ATPases in plants by modifying 14-3-3 proteins and cause the plant disease constriction canker. The first step in the pathway is performed by the fusicoccadiene synthase PaFS that possesses both prenyl transferase and terpene cyclase activity, converting isopentenyl diphosphate and dimethylallyl diphosphate into geranylgeranyl diphosphate (GGDP) and successively converting GGDP into fusicocca-2,10(14)-diene, a precursor for fusicoccin H. The second step is the oxidation at the C-8 position by the cytochrome P450 monooxygenase PaP450-2 to yield fusicocca-2,10(14)-diene-8-beta-ol. The cytochrome P450 monooxygenase PaP450-1 then catalyzes the hydroxylation at the C-16 position to produce fusicocca-2,10(14)-diene-8-beta,16-diol. The dioxygenase fc-dox then catalyzes the 16-oxydation of fusicocca-2,10(14)-diene-8-beta,16-diol to yield an aldehyde (8-beta-hydroxyfusicocca-1,10(14)-dien-16-al). The short-chain dehydrogenase/reductase fc-sdr catalyzes the reduction of the aldehyde to yield fusicocca-1,10(14)-diene-8-beta,16-diol. The next step is the hydroxylation at C-9 performed by the cytochrome P450 monooxygenase PaP450-3 that leads to fusicoccin H aglycon which is glycosylated to fusicoccin H by the O-glycosyltransferase PaGT. Hydroxylation at C-12 by the cytochrome P450 monooxygenase PaP450-4 leads then to the production of fusicoccin Q and is followed by methylation by the O-methyltransferase PaMT to yield fusicoccin P. Fusicoccin P is further converted to fusicoccin J via prenylation by the O-glucose prenyltransferase PaPT. Cytochrome P450 monooxygenase PaP450-5 then performs hydroxylation at C-19 to yield dideacetyl-fusicoccin A which is acetylated to 3'-O-deacetyl-fusicoccin A by the O-acetyltransferase PaAT-2. Finally, a another acetylation by the O-acetyltransferase PaAT-1 yields fusicoccin A. In Phomopsis amygdali (Fusicoccum amygdali), this protein is O-glucose prenyltransferase PaPT.